Reading from the N-terminus, the 592-residue chain is Guanylate-binding protein 1 (592 aa).

Residues Met-1–Cys-311 are GTPase domain (Globular). The GB1/RHD3-type G domain occupies Thr-35 to Lys-278. Residues Gly-45–Ser-52, Leu-67–Ser-69, and Asp-97–Leu-101 contribute to the GTP site. At Ser-156 the chain carries Phosphoserine; by PIM1. (Microbial infection) Glycyl lysine isopeptide (Lys-Gly) (interchain with G-Cter in ubiquitin) cross-links involve residues Lys-207, Lys-209, Lys-210, Lys-382, Lys-562, Lys-567, Lys-573, and Lys-587. At Cys-589 the chain carries Cysteine methyl ester. Cys-589 is lipidated: S-farnesyl cysteine. Thr-590 bears the Phosphothreonine; by PIM1 mark. A propeptide spans Thr-590–Ser-592 (removed in mature form).

This sequence belongs to the TRAFAC class dynamin-like GTPase superfamily. GB1/RHD3 GTPase family. GB1 subfamily. As to quaternary structure, homodimer; homodimerization occurs upon GTP-binding and is required for the second hydrolysis step from GDP to GMP. Undergoes conformational changes and oligomerization upon GTP-binding and hydrolysis. Heterodimer with other family members, including GBP2, GBP3, GBP4 and GBP5. Dimerization regulates subcellular location to membranous structures. Interacts with SQSTM1. Interacts (when phosphorylated) with 14-3-3 protein sigma (SFN); leading to GBP1 retention in the cytosol and inactivation. In terms of processing, isoprenylation is required for proper subcellular location. Phosphorylated at Ser-156 by PIM1 in absence of infection, inhibits GBP1: phosphorylation promotes interaction with 14-3-3 protein sigma (SFN), leading to GBP1 retention in the cytosol. Dephosphorylated in response to infection, liberating GBP1. Post-translationally, (Microbial infection) Ubiquitinated by S.flexneri IpaH9.8, leading to its degradation by the proteasome, thereby preventing its ability to promote host defense against bacterial infection.

It localises to the cytoplasmic vesicle membrane. The protein localises to the golgi apparatus membrane. The protein resides in the cell membrane. Its subcellular location is the cytoplasm. It is found in the cytosol. It localises to the secreted. The enzyme catalyses GTP + H2O = GDP + phosphate + H(+). It carries out the reaction GDP + H2O = GMP + phosphate + H(+). Interferon (IFN)-inducible GTPase that plays important roles in innate immunity against a diverse range of bacterial, viral and protozoan pathogens. Hydrolyzes GTP to GMP in two consecutive cleavage reactions: GTP is first hydrolyzed to GDP and then to GMP in a processive manner. Following infection, recruited to the pathogen-containing vacuoles or vacuole-escaped bacteria and promotes both inflammasome assembly and autophagy. Acts as a positive regulator of inflammasome assembly by facilitating the detection of inflammasome ligands from pathogens. Involved in the lysis of pathogen-containing vacuoles, releasing pathogens into the cytosol. Following pathogen release in the cytosol, forms a protein coat in a GTPase-dependent manner that encapsulates pathogens and promotes the detection of ligands by pattern recognition receptors. Plays a key role in inflammasome assembly in response to infection by Gram-negative bacteria: following pathogen release in the cytosol, forms a protein coat that encapsulates Gram-negative bacteria and directly binds to lipopolysaccharide (LPS), disrupting the O-antigen barrier and unmasking lipid A that is that detected by the non-canonical inflammasome effector CASP4/CASP11. Also promotes recruitment of proteins that mediate bacterial cytolysis, leading to release double-stranded DNA (dsDNA) that activates the AIM2 inflammasome. Involved in autophagy by regulating bacteriolytic peptide generation via its interaction with ubiquitin-binding protein SQSTM1, which delivers monoubiquitinated proteins to autolysosomes for the generation of bacteriolytic peptides. Confers protection to several pathogens, including the bacterial pathogens L.monocytogenes and M.bovis BCG as well as the protozoan pathogen T.gondii. Exhibits antiviral activity against influenza virus. The sequence is that of Guanylate-binding protein 1 from Homo sapiens (Human).